A 216-amino-acid polypeptide reads, in one-letter code: Guanylate kinase (216 aa).

Residues 11–189 (GVLIVISGPS…AVKKIEAILL (179 aa)) enclose the Guanylate kinase-like domain. ATP is bound at residue 18–25 (GPSGAGKG).

This sequence belongs to the guanylate kinase family.

Its subcellular location is the cytoplasm. It carries out the reaction GMP + ATP = GDP + ADP. Functionally, essential for recycling GMP and indirectly, cGMP. This chain is Guanylate kinase, found in Clostridium perfringens (strain SM101 / Type A).